The following is a 226-amino-acid chain: PKHD-type hydroxylase PP_0862 (226 aa).

Residues 78 to 178 form the Fe2OG dioxygenase domain; the sequence is KVFPPLINCY…RYAAFFWTQS (101 aa). Residues His96, Asp98, and His159 each coordinate Fe cation. Arg169 lines the 2-oxoglutarate pocket.

Requires Fe(2+) as cofactor. L-ascorbate is required as a cofactor.

The protein is PKHD-type hydroxylase PP_0862 of Pseudomonas putida (strain ATCC 47054 / DSM 6125 / CFBP 8728 / NCIMB 11950 / KT2440).